The sequence spans 146 residues: Hemoglobin subunit beta-1/2 (146 aa).

At valine 1 the chain carries N-acetylvaline. Residues 2–146 enclose the Globin domain; the sequence is HLTGEEKSGL…VANALAHKYH (145 aa). Threonine 12 is modified (phosphothreonine). At lysine 59 the chain carries N6-acetyllysine. Histidine 63 contacts heme b. Lysine 82 is modified (N6-acetyllysine). Histidine 92 is a heme b binding site. The residue at position 93 (cysteine 93) is an S-nitrosocysteine. At lysine 144 the chain carries N6-acetyllysine.

It belongs to the globin family. As to quaternary structure, heterotetramer of two alpha chains and two beta chains. In terms of tissue distribution, red blood cells.

Its function is as follows. Involved in oxygen transport from the lung to the various peripheral tissues. The sequence is that of Hemoglobin subunit beta-1/2 (HBB) from Physeter macrocephalus (Sperm whale).